We begin with the raw amino-acid sequence, 137 residues long: Holo-[acyl-carrier-protein] synthase (137 aa).

2 residues coordinate Mg(2+): Asp8 and Glu57.

The protein belongs to the P-Pant transferase superfamily. AcpS family. Mg(2+) serves as cofactor.

The protein resides in the cytoplasm. The enzyme catalyses apo-[ACP] + CoA = holo-[ACP] + adenosine 3',5'-bisphosphate + H(+). Transfers the 4'-phosphopantetheine moiety from coenzyme A to a Ser of acyl-carrier-protein. This chain is Holo-[acyl-carrier-protein] synthase, found in Cereibacter sphaeroides (strain ATCC 17029 / ATH 2.4.9) (Rhodobacter sphaeroides).